The following is a 240-amino-acid chain: Large ribosomal subunit protein uL2 (240 aa).

The segment covering 1 to 11 (MGKRLISQNRG) has biased composition (polar residues). Disordered stretches follow at residues 1–26 (MGKR…KRKG) and 206–240 (GGGR…TGRK). Basic residues-rich tracts occupy residues 13–26 (GTPK…KRKG) and 228–240 (KVGH…TGRK).

Belongs to the universal ribosomal protein uL2 family. Part of the 50S ribosomal subunit. Forms a bridge to the 30S subunit in the 70S ribosome.

Functionally, one of the primary rRNA binding proteins. Required for association of the 30S and 50S subunits to form the 70S ribosome, for tRNA binding and peptide bond formation. It has been suggested to have peptidyltransferase activity; this is somewhat controversial. Makes several contacts with the 16S rRNA in the 70S ribosome. The protein is Large ribosomal subunit protein uL2 of Methanococcus vannielii (strain ATCC 35089 / DSM 1224 / JCM 13029 / OCM 148 / SB).